We begin with the raw amino-acid sequence, 216 residues long: Putative cat eye syndrome critical region protein 9 (216 aa).

Residues Met-1–Ala-23 form the signal peptide. The N-linked (GlcNAc...) asparagine glycan is linked to Asn-148.

As to expression, ubiquitously expressed with higher expression in heart.

It is found in the secreted. The protein is Putative cat eye syndrome critical region protein 9 (CECR9) of Homo sapiens (Human).